A 250-amino-acid chain; its full sequence is MRVDLNCDLGEAFGNYFFGGDHQIIPLITSANVACGFHAGDENVMNETVKLAKAHNVAVGAHPGLPDLKGFGRRNIDISNEEIYNLMIYQLGALQGFCRIHQVKINHVKPHGALYQMGAKDREIASVIAQAVYDFDPSLVLVGLANSYLISEAKNVGLITASEVFADRRYEDDGQLVSRKESDAVITDTDEALKQVLKMVKENKVISKNNKEVTLQADTICVHGDGEHALLFVSKIREILMKEGIDIQSL.

This sequence belongs to the LamB/PxpA family. In terms of assembly, forms a complex composed of PxpA, PxpB and PxpC.

It carries out the reaction 5-oxo-L-proline + ATP + 2 H2O = L-glutamate + ADP + phosphate + H(+). Its function is as follows. Catalyzes the cleavage of 5-oxoproline to form L-glutamate coupled to the hydrolysis of ATP to ADP and inorganic phosphate. The chain is 5-oxoprolinase subunit A from Staphylococcus aureus (strain MRSA252).